An 86-amino-acid polypeptide reads, in one-letter code: U15-lycotoxin-Ls1d (86 aa).

The N-terminal stretch at 1 to 20 is a signal peptide; that stretch reads MNSKIFAVLLLLGLLSCVLS. One can recognise a WAP domain in the interval 21–66; sequence DQYCPKSSITACKKMNIRNDCCKDDDCTGGSWCCATPCGNFCKYPT. Disulfide bonds link Cys24/Cys54, Cys32/Cys58, Cys41/Cys53, Cys42/Cys80, and Cys47/Cys62.

This sequence belongs to the venom protein 11 family. 01 (wap-1) subfamily. In terms of processing, contains 5 disulfide bonds. In terms of tissue distribution, expressed by the venom gland.

It is found in the secreted. Its function is as follows. Has antibacterial activity. The protein is U15-lycotoxin-Ls1d of Lycosa singoriensis (Wolf spider).